The chain runs to 201 residues: ATP-dependent Clp protease proteolytic subunit (201 aa).

Ser101 (nucleophile) is an active-site residue. His126 is a catalytic residue.

This sequence belongs to the peptidase S14 family. As to quaternary structure, component of the chloroplastic Clp protease core complex.

The protein localises to the plastid. The protein resides in the chloroplast stroma. It catalyses the reaction Hydrolysis of proteins to small peptides in the presence of ATP and magnesium. alpha-casein is the usual test substrate. In the absence of ATP, only oligopeptides shorter than five residues are hydrolyzed (such as succinyl-Leu-Tyr-|-NHMec, and Leu-Tyr-Leu-|-Tyr-Trp, in which cleavage of the -Tyr-|-Leu- and -Tyr-|-Trp bonds also occurs).. Its function is as follows. Cleaves peptides in various proteins in a process that requires ATP hydrolysis. Has a chymotrypsin-like activity. Plays a major role in the degradation of misfolded proteins. This is ATP-dependent Clp protease proteolytic subunit from Chaetosphaeridium globosum (Charophycean green alga).